The primary structure comprises 302 residues: NADH-cytochrome b5 reductase 2 (302 aa).

A propeptide spans 1-41 (MFSRLSRSHSKALPIALGTVAIAAATAFYFANRNQHSFVFN) (removed in mature form). Residues 12 to 32 (ALPIALGTVAIAAATAFYFAN) traverse the membrane as a helical segment. The 105-residue stretch at 51–155 (DKWIDLPISK…KGPIMKWKWQ (105 aa)) folds into the FAD-binding FR-type domain. An FAD-binding site is contributed by 158–193 (QFKSITLLGAGTGINPLYQLAHHIVENPNDKTKVNL). Ser-278 carries the phosphoserine modification.

This sequence belongs to the flavoprotein pyridine nucleotide cytochrome reductase family. The cofactor is FAD. Post-translationally, there are two isoforms of NADH-cytochrome b5 reductase, a 34 kDa form (p34) and a 32 kDa form (p32). The p34 form becomes firmly anchored to the outer mitochondrial membrane after an incomplete translocation arrest. The p32 form is formed after translocation of the p34 precursor to the inner mitochondrial membrane, where it is processed by mitochondrial inner membrane peptidase (IMP) complex and released to the intermembrane space.

It localises to the mitochondrion intermembrane space. The protein resides in the mitochondrion outer membrane. It carries out the reaction 2 Fe(III)-[cytochrome b5] + NADH = 2 Fe(II)-[cytochrome b5] + NAD(+) + H(+). In terms of biological role, the outer membrane form may mediate the reduction of outer membrane cytochrome b5, and the soluble inter-membrane space form may transfer electrons from external NADH to cytochrome c, thereby mediating an antimycin-insensitive, energy-coupled oxidation of external NADH by yeast mitochondria. Involved in the reduction of D-erythroascorbyl free radicals. This chain is NADH-cytochrome b5 reductase 2 (MCR1), found in Saccharomyces cerevisiae (strain YJM789) (Baker's yeast).